The following is a 273-amino-acid chain: Tryptase (273 aa).

A signal peptide spans 1 to 18 (MLKLLLLTLPLLSSLVHA). Positions 19 to 28 (APSLAMPREG) are cleaved as a propeptide — activation peptide. One can recognise a Peptidase S1 domain in the interval 29–270 (IVGGQEASGN…YLDWIYRYVP (242 aa)). Residue Asn49 is glycosylated (N-linked (GlcNAc...) asparagine). Cys57 and Cys73 are oxidised to a cystine. Catalysis depends on charge relay system residues His72 and Asp119. 3 disulfide bridges follow: Cys153–Cys228, Cys186–Cys209, and Cys218–Cys246. The active-site Charge relay system is the Ser222.

The protein belongs to the peptidase S1 family. Tryptase subfamily. As to quaternary structure, homotetramer. In terms of processing, glycosylated. In terms of tissue distribution, mast cells.

It is found in the secreted. The catalysed reaction is Preferential cleavage: Arg-|-Xaa, Lys-|-Xaa, but with more restricted specificity than trypsin.. In terms of biological role, tryptase is the major neutral protease present in mast cells and is secreted upon the coupled activation-degranulation response of this cell type. May play a role in innate immunity. In Rattus norvegicus (Rat), this protein is Tryptase (Tpsab1).